The following is a 477-amino-acid chain: E3 ubiquitin-protein ligase TRIM17 (477 aa).

The RING-type zinc finger occupies Cys-16–Arg-66. A B box-type zinc finger spans residues His-94–Leu-135. Zn(2+) contacts are provided by Cys-99, His-102, Cys-121, and His-127. The stretch at Leu-135 to Leu-225 forms a coiled coil. The B30.2/SPRY domain occupies Ala-276–Val-475.

The protein belongs to the TRIM/RBCC family. As to quaternary structure, interacts (via coiled coil) with TRIM44 (via coiled coil). Interacts with TRIM28; this interaction prevents TRIM28 activity on BCL2A1. Interacts with TRIM41; this interaction prevents TRIM41 activity on ZSCAN2. Interacts with BECN1. Interacts with NFATC3 and NFATC4; these interactions prevent NFATC3 and NFATC4 nuclear localization. Post-translationally, auto-ubiquitinated. As to expression, expressed almost exclusively in the testis.

The protein localises to the cytoplasm. It is found in the lysosome. It catalyses the reaction S-ubiquitinyl-[E2 ubiquitin-conjugating enzyme]-L-cysteine + [acceptor protein]-L-lysine = [E2 ubiquitin-conjugating enzyme]-L-cysteine + N(6)-ubiquitinyl-[acceptor protein]-L-lysine.. It functions in the pathway protein modification; protein ubiquitination. In terms of biological role, E3 ubiquitin ligase that plays important roles in the regulation of neuronal apoptosis, selective autophagy or cell proliferation. Stimulates the degradation of kinetochore ZW10 interacting protein ZWINT in a proteasome-dependent manner, leading to negative regulation of cell proliferation. Inhibits autophagic degradation of diverse known targets while contributing to autophagy of midbodies. Autophagy-inhibitory activity involves MCL1, which TRIM17 assembles into complexes with the key autophagy regulator BECN1. Controls neuronal apoptosis by mediating ubiquitination and degradation of MCL1 to initiate neuronal death. In addition, regulates NFAT transcription factors NFATC3 and NFATC4 activities by preventing their nuclear localization, thus inhibiting their transcriptional activities. Decreases TRIM41-mediated degradation of ZSCAN2 thereby stimulating alpha-synuclein/SNCA transcription in neuronal cells. Prevents the E3 ubiquitin-ligase activity of TRIM28 and its interaction with anti-apoptotic BCL2A1, blocking TRIM28 from ubiquitinating BCL2A1. This is E3 ubiquitin-protein ligase TRIM17 (Trim17) from Rattus norvegicus (Rat).